The chain runs to 94 residues: uncharacterized protein (94 aa).

This is an uncharacterized protein from Saccharomyces cerevisiae (strain ATCC 204508 / S288c) (Baker's yeast).